A 98-amino-acid polypeptide reads, in one-letter code: Exopolysaccharide production repressor protein (98 aa).

A run of 2 helical transmembrane segments spans residues 6–26 (VFLS…YLNG) and 35–55 (TLIC…FLVW). The tract at residues 73 to 98 (AEAANDEKQPGKVSLRRLNRPHHLNS) is disordered. Basic residues predominate over residues 86–98 (SLRRLNRPHHLNS).

It is found in the cell membrane. It participates in glycan metabolism; exopolysaccharide biosynthesis. Functionally, inhibition of exopolysaccharide synthesis (EPS) and nodulation ability (NOD). This is Exopolysaccharide production repressor protein (exoX) from Rhizobium meliloti (strain 1021) (Ensifer meliloti).